The following is a 2202-amino-acid chain: Nonribosomal peptide synthetase 5 (2202 aa).

Residues 58 to 443 (TYAQLDALSD…LLSYDKVDSA (386 aa)) form an adenylation 1 region. The region spanning 517–593 (ERGLGAVESV…NIAAAVVELS (77 aa)) is the Carrier 1 domain. At S554 the chain carries O-(pantetheine 4'-phosphoryl)serine. The tract at residues 625-918 (IAPMTDMQTR…INTLPLAINT (294 aa)) is condensation 1. An adenylation 2 region spans residues 1105-1482 (TYREFGRMTE…EVQSTISKLA (378 aa)). A Carrier 2 domain is found at 1563–1643 (DLETDTQRVL…DLSLAIDELV (81 aa)). Position 1602 is an O-(pantetheine 4'-phosphoryl)serine (S1602). The tract at residues 1664 to 1952 (GQLPLSYLEK…FLDRLLLRIQ (289 aa)) is condensation 2. Residues 2103–2129 (PVGLTPSHEGSAELTNGTNKTDSTTGQ) form a disordered region. Residues 2115 to 2129 (ELTNGTNKTDSTTGQ) show a composition bias toward polar residues. Residues 2130–2202 (QELENNLTDV…LELATCAVII (73 aa)) enclose the Carrier 3 domain. S2164 is modified (O-(pantetheine 4'-phosphoryl)serine).

Belongs to the NRP synthetase family.

Its function is as follows. Nonribosomal peptide synthesis (NRPS) is a key mechanism responsible for the biosynthesis of bioactive metabolites which are potentially contributing to organismal virulence. The polypeptide is Nonribosomal peptide synthetase 5 (NRPS5) (Aspergillus fumigatus (strain ATCC MYA-4609 / CBS 101355 / FGSC A1100 / Af293) (Neosartorya fumigata)).